An 858-amino-acid chain; its full sequence is Protein 4.1 (858 aa).

Positions Met1–Asp125 are disordered. Position 14 is a phosphoserine (Ser14). The span at Gln31–Gln50 shows a compositional bias: low complexity. At Thr62 the chain carries Phosphothreonine. The segment covering Pro63–Glu77 has biased composition (basic and acidic residues). The span at Ser78–Leu89 shows a compositional bias: low complexity. Phosphoserine is present on residues Ser86, Ser87, Ser97, Ser106, Ser123, Ser151, Ser153, and Ser154. Over residues Glu103–Glu119 the composition is skewed to basic and acidic residues. Positions Ile155–His208 are disordered. Basic and acidic residues-rich tracts occupy residues Gln161–Glu176 and Glu185–Ala200. The residue at position 192 (Ser192) is a Phosphoserine. Residues Met211–Ser492 form the FERM domain. Tyr223 carries the phosphotyrosine modification. Thr379 bears the Phosphothreonine mark. The hydrophilic stretch occupies residues Thr495 to Trp608. Positions Thr518–Asp636 are disordered. A phosphoserine mark is found at Ser522, Ser541, Ser543, and Ser556. Basic and acidic residues-rich tracts occupy residues Thr581–Glu595 and Glu606–Thr615. The interval Lys609 to Pro707 is spectrin--actin-binding. Residues Glu616–Lys629 are compositionally biased toward polar residues. Tyr654 carries the post-translational modification Phosphotyrosine. 5 positions are modified to phosphoserine: Ser658, Ser668, Ser678, Ser703, and Ser706. Positions Thr710–Glu858 are C-terminal (CTD). Thr730 and Thr853 each carry phosphothreonine.

As to quaternary structure, binds with a high affinity to glycophorin and with lower affinity to band III protein. Associates with the nuclear mitotic apparatus. Binds calmodulin, CPAP and DLG1. Also found to associate with contractile apparatus and tight junctions. Interacts with NUMA1; this interaction is negatively regulated by CDK1 during metaphase and promotes anaphase-specific localization of NUMA1 in symmetrically dividing cells. Interacts with ATP2B1; regulates small intestinal calcium absorption through regulation of membrane expression of ATP2B1. In terms of processing, O-glycosylated; contains N-acetylglucosamine side chains in the C-terminal domain. Post-translationally, phosphorylated at multiple sites by different protein kinases and each phosphorylation event selectively modulates the protein's functions. Phosphorylation on Tyr-654 reduces the ability of 4.1 to promote the assembly of the spectrin/actin/4.1 ternary complex.

The protein localises to the nucleus. It localises to the cytoplasm. Its subcellular location is the cytoskeleton. The protein resides in the cell cortex. Its function is as follows. Protein 4.1 is a major structural element of the erythrocyte membrane skeleton. It plays a key role in regulating membrane physical properties of mechanical stability and deformability by stabilizing spectrin-actin interaction. Recruits DLG1 to membranes. Required for dynein-dynactin complex and NUMA1 recruitment at the mitotic cell cortex during anaphase. The sequence is that of Protein 4.1 from Mus musculus (Mouse).